Here is a 341-residue protein sequence, read N- to C-terminus: N-acetyl-gamma-glutamyl-phosphate reductase (341 aa).

Cys147 is a catalytic residue.

The protein belongs to the NAGSA dehydrogenase family. Type 1 subfamily.

Its subcellular location is the cytoplasm. The catalysed reaction is N-acetyl-L-glutamate 5-semialdehyde + phosphate + NADP(+) = N-acetyl-L-glutamyl 5-phosphate + NADPH + H(+). It participates in amino-acid biosynthesis; L-arginine biosynthesis; N(2)-acetyl-L-ornithine from L-glutamate: step 3/4. Functionally, catalyzes the NADPH-dependent reduction of N-acetyl-5-glutamyl phosphate to yield N-acetyl-L-glutamate 5-semialdehyde. This Dehalococcoides mccartyi (strain CBDB1) protein is N-acetyl-gamma-glutamyl-phosphate reductase.